The primary structure comprises 58 residues: Small ribosomal subunit protein bS21 (58 aa).

The tract at residues D31 to R58 is disordered. Over residues Y45–R58 the composition is skewed to basic residues.

This sequence belongs to the bacterial ribosomal protein bS21 family.

This is Small ribosomal subunit protein bS21 from Prochlorococcus marinus (strain MIT 9303).